Consider the following 406-residue polypeptide: Tryptophan synthase beta chain (406 aa).

The residue at position 99 (Lys99) is an N6-(pyridoxal phosphate)lysine.

The protein belongs to the TrpB family. Tetramer of two alpha and two beta chains. Requires pyridoxal 5'-phosphate as cofactor.

The catalysed reaction is (1S,2R)-1-C-(indol-3-yl)glycerol 3-phosphate + L-serine = D-glyceraldehyde 3-phosphate + L-tryptophan + H2O. Its pathway is amino-acid biosynthesis; L-tryptophan biosynthesis; L-tryptophan from chorismate: step 5/5. Functionally, the beta subunit is responsible for the synthesis of L-tryptophan from indole and L-serine. This Brucella canis (strain ATCC 23365 / NCTC 10854 / RM-666) protein is Tryptophan synthase beta chain.